The following is a 416-amino-acid chain: Putative UV-damage repair protein UvrX (416 aa).

In terms of domain architecture, UmuC spans 12–196 (ILCVDMKSFY…RPLSKMWGIG (185 aa)). Residues D16 and D115 each contribute to the Mg(2+) site. The active site involves E116.

The protein belongs to the DNA polymerase type-Y family. The cofactor is Mg(2+).

This Bacillus subtilis (strain 168) protein is Putative UV-damage repair protein UvrX (uvrX).